Here is a 346-residue protein sequence, read N- to C-terminus: Flap endonuclease 1 (346 aa).

The segment at 1–102 (MGVTELGKLI…LEIEQRKKAK (102 aa)) is N-domain. Residues Asp31, Asp84, Glu156, Glu158, Asp177, Asp179, and Asp239 each contribute to the Mg(2+) site. The segment at 120-261 (DVAKYAKRAI…KALKLIWEFG (142 aa)) is I-domain.

The protein belongs to the XPG/RAD2 endonuclease family. FEN1 subfamily. Interacts with PCNA. PCNA stimulates the nuclease activity without altering cleavage specificity. It depends on Mg(2+) as a cofactor.

Structure-specific nuclease with 5'-flap endonuclease and 5'-3' exonuclease activities involved in DNA replication and repair. During DNA replication, cleaves the 5'-overhanging flap structure that is generated by displacement synthesis when DNA polymerase encounters the 5'-end of a downstream Okazaki fragment. Binds the unpaired 3'-DNA end and kinks the DNA to facilitate 5' cleavage specificity. Cleaves one nucleotide into the double-stranded DNA from the junction in flap DNA, leaving a nick for ligation. Also involved in the base excision repair (BER) pathway. Acts as a genome stabilization factor that prevents flaps from equilibrating into structures that lead to duplications and deletions. Also possesses 5'-3' exonuclease activity on nicked or gapped double-stranded DNA. In Pyrobaculum calidifontis (strain DSM 21063 / JCM 11548 / VA1), this protein is Flap endonuclease 1.